Here is a 527-residue protein sequence, read N- to C-terminus: Cytochrome P450 monooygenase 3 (527 aa).

The chain crosses the membrane as a helical span at residues 21 to 41; sequence IAVAFAALCGATGLLAFSWWI. Cys-473 lines the heme pocket.

This sequence belongs to the cytochrome P450 family. Requires heme as cofactor.

The protein resides in the membrane. It participates in plant hormone biosynthesis; gibberellin biosynthesis. Functionally, gibberellin 13-hydroxylase; part of the gene cluster that mediates the biosynthesis of gibberellins (GAs), diterpenoids that may provide a selective advantage during infection of the preferred host plant, rice. Gibberellins (GAs) are diterpenoids and are synthesized via the mevalonate pathway. Biosynthesis of the major metabolite GA3 (gibberellic acid) from geranylgeranyl diphosphate (GGPP) requires 13 steps. The GGPP produced by the geranylgeranyl diphosphate synthase GGS2 is converted to ent-kaurene via ent-copalyldiphosphate in a two-step cyclization reaction performed by the bifunctional ent-copalyl diphosphate synthase/ent-kaurene synthase enzyme (CPS/KS). Ent-Kaurene is metabolized to GAs by a series of oxidation reactions catalyzed by cytochrome P450 monooxygenases. Cytochrome P450 monooxygenase P450-4 is an ent-kaurene oxidase that catalyzes the three oxidation steps between ent-kaurene and ent-kaurenoic acid. The highly multifunctional cytochrome P450 monooxygenase P450-1 then catalyzes four steps involving oxidation at two carbon atoms, in the main pathway from ent-kaurenoic acid to GA14 via GA12-aldehyde as well as producing kaurenolides and fujenoic acids as by-products. The cytochrome P450 monooxygenase P450-2 then converts GA14 to GA4 by removal of C-20. GA4 is further converted to GA7 by the GA4 desaturase DES via 1,2-desaturation before cytochrome P450 monooxygenase P450-3, a 13-hydroxylase, hydroxylates GA7 to GA3, the final product of the GA-biosynthetic pathway. This Gibberella fujikuroi (strain CBS 195.34 / IMI 58289 / NRRL A-6831) (Bakanae and foot rot disease fungus) protein is Cytochrome P450 monooygenase 3.